The primary structure comprises 403 residues: Argininosuccinate synthase (403 aa).

Residue 10–18 (AYSGGVDTS) participates in ATP binding. Residue Y89 participates in L-citrulline binding. Position 119 (G119) interacts with ATP. Positions 121, 125, and 126 each coordinate L-aspartate. N125 contacts L-citrulline. L-citrulline contacts are provided by R129, S177, S186, E262, and Y274.

This sequence belongs to the argininosuccinate synthase family. Type 1 subfamily. In terms of assembly, homotetramer.

The protein localises to the cytoplasm. The enzyme catalyses L-citrulline + L-aspartate + ATP = 2-(N(omega)-L-arginino)succinate + AMP + diphosphate + H(+). The protein operates within amino-acid biosynthesis; L-arginine biosynthesis; L-arginine from L-ornithine and carbamoyl phosphate: step 2/3. This is Argininosuccinate synthase from Synechococcus sp. (strain JA-3-3Ab) (Cyanobacteria bacterium Yellowstone A-Prime).